Reading from the N-terminus, the 369-residue chain is Coiled-coil domain-containing protein 130 homolog (369 aa).

A compositionally biased stretch (basic and acidic residues) spans 233-263 (TRYRDTKTHDDHLESSRDRIESRRIFRRPEE). The disordered stretch occupies residues 233-369 (TRYRDTKTHD…EYGNSSDDSD (137 aa)). The segment covering 266–282 (TPSTSSGSSGGAVPSAS) has biased composition (low complexity). Residues 283 to 297 (ERLKATMKAERDKRI) are compositionally biased toward basic and acidic residues. The segment covering 299–310 (ASFSTAGTSSAT) has biased composition (low complexity).

Belongs to the CWC16 family.

The sequence is that of Coiled-coil domain-containing protein 130 homolog from Caenorhabditis elegans.